A 203-amino-acid chain; its full sequence is Auxin-induced protein 22E (203 aa).

The short motif at 15-19 is the EAR-like (transcriptional repression) element; the sequence is LRLGL. Residues 15 to 77 are disordered; it reads LRLGLPGSDE…DHNEDSVQPA (63 aa). Positions 43-52 are enriched in basic and acidic residues; sequence SSPELEESRC. Over residues 58–67 the composition is skewed to low complexity; the sequence is SDSSDSTTTS. One can recognise a PB1 domain in the interval 107–199; sequence GMYLKVSMAG…RIIKGSEAKG (93 aa).

The protein belongs to the Aux/IAA family. Homodimers and heterodimers.

The protein localises to the nucleus. Aux/IAA proteins are short-lived transcriptional factors that function as repressors of early auxin response genes at low auxin concentrations. Repression is thought to result from the interaction with auxin response factors (ARFs), proteins that bind to the auxin-responsive promoter element (AuxRE). Formation of heterodimers with ARF proteins may alter their ability to modulate early auxin response genes expression. The chain is Auxin-induced protein 22E (AUX22E) from Vigna radiata var. radiata (Mung bean).